A 434-amino-acid polypeptide reads, in one-letter code: MYSIDSIKYLIHIHIEAEGVVEKTDVVGAIFGQTEGLLGEELDLRDLQRSGRIGRIDVQIVSKHGKTAGECYIASSLDRAETAILAAALETIDRIGPCMAAIRIQNIEDLRAIKRRQIVERAKELLLESFDEVGISTYDILTEVREASRVEKITTIGPERLPAGPAVLESDAIIIVEGRADVLNLLKCGINNTVAVEGTKVPETVIDLSAKKNTTVFVDGDRGGDLILRELLQVADIDFVAFSPRRRSVEDMSRKEIVKSLRNKVPASVLKSHIEKDEPISDLVFEIEAGEEEHSSVSQKEEGNNTTPDVPADLPEEPPKSNIDEAIIPPITTSEQNLVKPENPHTIQEHTQYMKNTGRSRVLAEDAGVIGDYSLQELKAILPKLNDDVAGVIVDAAVDQKFIDQAFAKGLTYVAANAFEGIVRRPAGLRLIPF.

Residues 171–250 (DAIIIVEGRA…AFSPRRRSVE (80 aa)) enclose the Toprim domain. Residues Glu177, Asp219, and Asp221 each contribute to the Mg(2+) site. The tract at residues 290–319 (GEEEHSSVSQKEEGNNTTPDVPADLPEEPP) is disordered. Over residues 292–303 (EEHSSVSQKEEG) the composition is skewed to basic and acidic residues.

The protein belongs to the archaeal DnaG primase family. Forms a ternary complex with MCM helicase and DNA. Requires Mg(2+) as cofactor.

The catalysed reaction is ssDNA + n NTP = ssDNA/pppN(pN)n-1 hybrid + (n-1) diphosphate.. Functionally, RNA polymerase that catalyzes the synthesis of short RNA molecules used as primers for DNA polymerase during DNA replication. In Methanocorpusculum labreanum (strain ATCC 43576 / DSM 4855 / Z), this protein is DNA primase DnaG.